The primary structure comprises 810 residues: Protein 4.1 (810 aa).

The interval 1–124 (MTTEKSLVAE…KEIEFGTSLD (124 aa)) is disordered. S14 carries the post-translational modification Phosphoserine. T61 is subject to Phosphothreonine. Basic and acidic residues predominate over residues 62-76 (PTHEDLTKNKERTSE). S85, S86, S96, S105, S122, S150, S152, S153, S189, and S192 each carry phosphoserine. The segment covering 102-118 (DVESAKEKCEGGQKEIE) has biased composition (basic and acidic residues). The segment at 152–203 (SSAETQPAQEEHREDPDFETKEGGGLEECSKIEVKEESPESKAERELKASQK) is disordered. A compositionally biased stretch (basic and acidic residues) spans 160-200 (QEEHREDPDFETKEGGGLEECSKIEVKEESPESKAERELKA). The 282-residue stretch at 211-492 (MHCKVSLLDD…EHHTFFRLTS (282 aa)) folds into the FERM domain. Position 223 is a phosphotyrosine (Y223). Residue T379 is modified to Phosphothreonine. The tract at residues 518–613 (TRQASALIDR…DQAEPEPTEV (96 aa)) is disordered. Phosphoserine is present on residues S522, S541, S543, and S555. Over residues 587–601 (AQKETVKDEEKKEEG) the composition is skewed to basic and acidic residues. The interval 615-659 (KDLDKSQEEIKKHHASISELKKNFMESVPEPRPSEWDKRLSTHSP) is spectrin--actin-binding. S620, S630, S655, and S658 each carry phosphoserine. Positions 660-810 (FRTLNINGQL…VHQETEISEE (151 aa)) are C-terminal (CTD). Residues T682 and T805 each carry the phosphothreonine modification.

As to quaternary structure, binds with a high affinity to glycophorin and with lower affinity to band III protein. Associates with the nuclear mitotic apparatus. Binds calmodulin, CPAP and DLG1. Also found to associate with contractile apparatus and tight junctions. Interacts with NUMA1; this interaction is negatively regulated by CDK1 during metaphase and promotes for anaphase-specific localization of NUMA1 in symmetrically dividing cells. Interacts with ATP2B1; regulates small intestinal calcium absorption through regulation of membrane expression of ATP2B1. O-glycosylated; contains N-acetylglucosamine side chains in the C-terminal domain. Post-translationally, phosphorylated at multiple sites by different protein kinases and each phosphorylation event selectively modulates the protein's functions.

It localises to the nucleus. Its subcellular location is the cytoplasm. The protein localises to the cytoskeleton. It is found in the cell cortex. Protein 4.1 is a major structural element of the erythrocyte membrane skeleton. It plays a key role in regulating membrane physical properties of mechanical stability and deformability by stabilizing spectrin-actin interaction. Recruits DLG1 to membranes. Required for dynein-dynactin complex and NUMA1 recruitment at the mitotic cell cortex during anaphase. The polypeptide is Protein 4.1 (Canis lupus familiaris (Dog)).